A 49-amino-acid polypeptide reads, in one-letter code: Osteocalcin (49 aa).

The 47-residue stretch at 1-47 (YLDPGLGAPAPYPDPLEPKREVCELNPDCDELADHIGFQEAYRRFYG) folds into the Gla domain. Residue proline 9 is modified to Hydroxyproline. The Ca(2+) site is built by glutamate 17, glutamate 21, glutamate 24, and aspartate 30. Residues glutamate 17, glutamate 21, and glutamate 24 each carry the 4-carboxyglutamate modification. A disulfide bond links cysteine 23 and cysteine 29.

This sequence belongs to the osteocalcin/matrix Gla protein family. In terms of processing, gamma-carboxyglutamate residues are formed by vitamin K dependent carboxylation by GGCX. These residues are essential for the binding of calcium. Decarboxylation promotes the hormone activity.

The protein localises to the secreted. The carboxylated form is one of the main organic components of the bone matrix, which constitutes 1-2% of the total bone protein. It acts as a negative regulator of bone formation and is required to limit bone formation without impairing bone resorption or mineralization. The carboxylated form binds strongly to apatite and calcium. In terms of biological role, the uncarboxylated form acts as a hormone secreted by osteoblasts, which regulates different cellular processes, such as energy metabolism, male fertility and brain development. Regulates of energy metabolism by acting as a hormone favoring pancreatic beta-cell proliferation, insulin secretion and sensitivity and energy expenditure. Uncarboxylated osteocalcin hormone also promotes testosterone production in the testes: acts as a ligand for G protein-coupled receptor GPRC6A at the surface of Leydig cells, initiating a signaling response that promotes the expression of enzymes required for testosterone synthesis in a CREB-dependent manner. Also acts as a regulator of brain development: osteocalcin hormone crosses the blood-brain barrier and acts as a ligand for GPR158 on neurons, initiating a signaling response that prevents neuronal apoptosis in the hippocampus, favors the synthesis of all monoamine neurotransmitters and inhibits that of gamma-aminobutyric acid (GABA). Osteocalcin also crosses the placenta during pregnancy and maternal osteocalcin is required for fetal brain development. This Capra hircus (Goat) protein is Osteocalcin (BGLAP).